A 279-amino-acid polypeptide reads, in one-letter code: Putative pyruvate, phosphate dikinase regulatory protein (279 aa).

157–164 (GVSRTSKT) contacts ADP.

It belongs to the pyruvate, phosphate/water dikinase regulatory protein family. PDRP subfamily.

The catalysed reaction is N(tele)-phospho-L-histidyl/L-threonyl-[pyruvate, phosphate dikinase] + ADP = N(tele)-phospho-L-histidyl/O-phospho-L-threonyl-[pyruvate, phosphate dikinase] + AMP + H(+). It catalyses the reaction N(tele)-phospho-L-histidyl/O-phospho-L-threonyl-[pyruvate, phosphate dikinase] + phosphate + H(+) = N(tele)-phospho-L-histidyl/L-threonyl-[pyruvate, phosphate dikinase] + diphosphate. Bifunctional serine/threonine kinase and phosphorylase involved in the regulation of the pyruvate, phosphate dikinase (PPDK) by catalyzing its phosphorylation/dephosphorylation. This is Putative pyruvate, phosphate dikinase regulatory protein from Lactobacillus helveticus (strain DPC 4571).